A 301-amino-acid polypeptide reads, in one-letter code: Light-independent protochlorophyllide reductase iron-sulfur ATP-binding protein (301 aa).

Residues 1-13 are compositionally biased toward low complexity; that stretch reads MNVTLRPPLAAAP. The interval 1 to 22 is disordered; sequence MNVTLRPPLAAAPRRPDGAGSV. ATP contacts are provided by residues 45 to 50 and Lys74; that span reads GIGKST. Ser49 serves as a coordination point for Mg(2+). Residues Cys130 and Cys164 each coordinate [4Fe-4S] cluster. Residues 215–216 and 239–241 each bind ATP; these read NR and PDL.

The protein belongs to the NifH/BchL/ChlL family. Homodimer. Protochlorophyllide reductase is composed of three subunits; BchL, BchN and BchB. The cofactor is [4Fe-4S] cluster.

The catalysed reaction is chlorophyllide a + oxidized 2[4Fe-4S]-[ferredoxin] + 2 ADP + 2 phosphate = protochlorophyllide a + reduced 2[4Fe-4S]-[ferredoxin] + 2 ATP + 2 H2O. It participates in porphyrin-containing compound metabolism; bacteriochlorophyll biosynthesis (light-independent). Component of the dark-operative protochlorophyllide reductase (DPOR) that uses Mg-ATP and reduced ferredoxin to reduce ring D of protochlorophyllide (Pchlide) to form chlorophyllide a (Chlide). This reaction is light-independent. The L component serves as a unique electron donor to the NB-component of the complex, and binds Mg-ATP. This Bradyrhizobium sp. (strain ORS 278) protein is Light-independent protochlorophyllide reductase iron-sulfur ATP-binding protein.